Reading from the N-terminus, the 113-residue chain is Putative pterin-4-alpha-carbinolamine dehydratase (113 aa).

This sequence belongs to the pterin-4-alpha-carbinolamine dehydratase family.

It carries out the reaction (4aS,6R)-4a-hydroxy-L-erythro-5,6,7,8-tetrahydrobiopterin = (6R)-L-erythro-6,7-dihydrobiopterin + H2O. This chain is Putative pterin-4-alpha-carbinolamine dehydratase, found in Bordetella bronchiseptica (strain ATCC BAA-588 / NCTC 13252 / RB50) (Alcaligenes bronchisepticus).